The chain runs to 80 residues: Myocilin opposite strand protein (80 aa).

A disordered region spans residues 53-80; sequence EQAPPPHRTYLTVPPAPPPSPAEDPTVS.

The sequence is that of Myocilin opposite strand protein from Homo sapiens (Human).